A 333-amino-acid polypeptide reads, in one-letter code: Tetraacyldisaccharide 4'-kinase (333 aa).

ATP is bound at residue 60 to 67 (TVGGTGKT).

Belongs to the LpxK family.

It carries out the reaction a lipid A disaccharide + ATP = a lipid IVA + ADP + H(+). It functions in the pathway glycolipid biosynthesis; lipid IV(A) biosynthesis; lipid IV(A) from (3R)-3-hydroxytetradecanoyl-[acyl-carrier-protein] and UDP-N-acetyl-alpha-D-glucosamine: step 6/6. Its function is as follows. Transfers the gamma-phosphate of ATP to the 4'-position of a tetraacyldisaccharide 1-phosphate intermediate (termed DS-1-P) to form tetraacyldisaccharide 1,4'-bis-phosphate (lipid IVA). This Pseudomonas putida (strain ATCC 700007 / DSM 6899 / JCM 31910 / BCRC 17059 / LMG 24140 / F1) protein is Tetraacyldisaccharide 4'-kinase.